The following is a 227-amino-acid chain: MVSVWWLLLLGTTVSHMVHTQEQPLLEEDTAPLDDLDVLEKAKGILIRSILEGFQEGQQNNRDLPDAMEMISKRQHPGKRFQEEIEKRQHPGKRDLEDLNLELSKRQHPGRRFVDDVEKRQHPGKREEGDWSRRYLTDDSRYLDLLSDVSRRQHPGKRVPAPLFTKRQHPGKRVTEEEGDTEFENSKEVGKRQHPGKRYDPCEGPNAYNCNSGNILPDSVEELSFGL.

Residues 1–15 form the signal peptide; the sequence is MVSVWWLLLLGTTVS. Gln-75 is modified (pyrrolidone carboxylic acid). Residue Pro-77 is modified to Proline amide. Gln-89 bears the Pyrrolidone carboxylic acid mark. A Proline amide modification is found at Pro-91. Gln-107 bears the Pyrrolidone carboxylic acid mark. Disordered stretches follow at residues 107-128 and 151-204; these read QHPG…KREE and RRQH…PCEG. Proline amide is present on Pro-109. A compositionally biased stretch (basic and acidic residues) spans 112-128; sequence RFVDDVEKRQHPGKREE. Pyrrolidone carboxylic acid is present on Gln-121. Position 123 is a proline amide (Pro-123). Pyrrolidone carboxylic acid is present on Gln-153. Pro-155 bears the Proline amide mark. Residue Gln-168 is modified to Pyrrolidone carboxylic acid. Residue Pro-170 is modified to Proline amide. Basic and acidic residues predominate over residues 184–201; sequence ENSKEVGKRQHPGKRYDP. Position 193 is a pyrrolidone carboxylic acid (Gln-193). Position 195 is a proline amide (Pro-195).

The protein belongs to the TRH family.

Its subcellular location is the secreted. This chain is Pro-thyrotropin-releasing hormone-A (trh-a), found in Xenopus laevis (African clawed frog).